We begin with the raw amino-acid sequence, 418 residues long: Protein SSXT (418 aa).

Ser2 carries the N-acetylserine modification. Positions 2–186 are transcriptional activation; it reads SVAFAAPRQR…NQMTMSQGQP (185 aa). The short motif at 50-53 is the SH2-binding element; that stretch reads YQQM. Disordered stretches follow at residues 77–118 and 188–418; these read APPT…PAPH and GNYG…NYQQ. Positions 225–251 are enriched in low complexity; it reads YQGQQPPMGMMGQVNQGNHMMGQRQIP. Residues 309–318 show a composition bias toward basic and acidic residues; sequence GYDRPYEDSS. Composition is skewed to low complexity over residues 328–337, 345–366, and 376–393; these read QYGQQQDAYQ, YPPQ…QGYG, and YPNY…YRPT. 2 tandem repeats follow at residues 344-356 and 357-369. The segment at 344–369 is 2 X 13 AA imperfect tandem repeats; it reads GYPPQQQQYPGQQGYPGQQQGYGPSQ. The short motif at 374 to 377 is the SH2-binding element; sequence PQYP. The short motif at 392 to 401 is the SH3-binding element; sequence PTQPGPPQPP. Residues 394–403 show a composition bias toward pro residues; it reads QPGPPQPPQQ. Over residues 404–418 the composition is skewed to low complexity; sequence RPYGYDQGQYGNYQQ. An SH2-binding motif is present at residues 413–416; that stretch reads YGNY.

It belongs to the SS18 family. As to quaternary structure, interacts with MLLT10. Isoform 1 interacts with RBM14 isoform 1. Isoform 2 interacts with RBM14 isoform 1. Component of the multiprotein chromatin-remodeling complexes SWI/SNF: SWI/SNF-A (BAF), SWI/SNF-B (PBAF) and related complexes. The canonical complex contains a catalytic subunit (either SMARCA4/BRG1/BAF190A or SMARCA2/BRM/BAF190B) and at least SMARCE1, ACTL6A/BAF53, SMARCC1/BAF155, SMARCC2/BAF170, and SMARCB1/SNF5/BAF47. Other subunits specific to each of the complexes may also be present permitting several possible combinations developmentally and tissue specific. Component of the SWI/SNF (GBAF) subcomplex, which includes at least BICRA or BICRAL (mutually exclusive), BRD9, SS18, the core BAF subunits, SMARCA2/BRM, SMARCA4/BRG1/BAF190A, ACTL6A/BAF53, SMARCC1/BAF155, and SMARCD1/BAF60A. As to expression, fairly ubiquitously expressed. Expressed in synovial sarcomas and in other human cell lines. The fusion genes SSXT-SSX1 and SSXT-SSX2 are expressed only in synovial sarcomas.

It localises to the nucleus. Its function is as follows. Appears to function synergistically with RBM14 as a transcriptional coactivator. Isoform 1 and isoform 2 function in nuclear receptor coactivation. Isoform 1 and isoform 2 function in general transcriptional coactivation. Component of SWI/SNF chromatin remodeling subcomplex GBAF that carries out key enzymatic activities, changing chromatin structure by altering DNA-histone contacts within a nucleosome in an ATP-dependent manner. This is Protein SSXT (SS18) from Homo sapiens (Human).